Consider the following 428-residue polypeptide: Enolase (428 aa).

Glutamine 167 serves as a coordination point for (2R)-2-phosphoglycerate. Residue glutamate 209 is the Proton donor of the active site. The Mg(2+) site is built by aspartate 246, glutamate 289, and aspartate 316. (2R)-2-phosphoglycerate is bound by residues lysine 341, arginine 370, serine 371, and lysine 392. Lysine 341 acts as the Proton acceptor in catalysis.

Belongs to the enolase family. As to quaternary structure, component of the RNA degradosome, a multiprotein complex involved in RNA processing and mRNA degradation. The cofactor is Mg(2+).

It localises to the cytoplasm. Its subcellular location is the secreted. The protein resides in the cell surface. It catalyses the reaction (2R)-2-phosphoglycerate = phosphoenolpyruvate + H2O. The protein operates within carbohydrate degradation; glycolysis; pyruvate from D-glyceraldehyde 3-phosphate: step 4/5. In terms of biological role, catalyzes the reversible conversion of 2-phosphoglycerate (2-PG) into phosphoenolpyruvate (PEP). It is essential for the degradation of carbohydrates via glycolysis. This chain is Enolase, found in Saccharophagus degradans (strain 2-40 / ATCC 43961 / DSM 17024).